Here is an 811-residue protein sequence, read N- to C-terminus: Phosphoinositide 3-kinase adapter protein 1 (811 aa).

In terms of domain architecture, TIR spans 8–146 (RGCDILIFYS…AVRKAISEDS (139 aa)). Residues 10–145 (CDILIFYSPD…AAVRKAISED (136 aa)) form a necessary and sufficient to mediate inhibition of NF-kappa-B downstream of activated TLRs; may mediate interaction with MYD88 and TIRAP region. The tract at residues 146–169 (SGCDSVTDTEPEDERELPFSKQTN) is disordered. The DBB domain maps to 182-318 (VQPDRIRCGA…NIPASGLHLF (137 aa)). Position 264 is a phosphotyrosine (Tyr-264). Tyr-420, Tyr-445, and Tyr-460 each carry phosphotyrosine; by SYK. Tyr-513 is modified (phosphotyrosine; by ABL1). The tract at residues 525–551 (DLANRPPVPVPRPEASAPGPPPPPDNE) is disordered. A compositionally biased stretch (pro residues) spans 530 to 550 (PPVPVPRPEASAPGPPPPPDN). Phosphotyrosine; by ABL1 is present on residues Tyr-553, Tyr-570, and Tyr-594. The residue at position 642 (Ser-642) is a Phosphoserine. Tyr-694 carries the post-translational modification Phosphotyrosine; by ABL1. Residues 702-811 (VLPARTELRR…PPPPVPPRGR (110 aa)) are disordered. Positions 707 to 716 (TELRRGDWKT) are enriched in basic and acidic residues. Residues 717-740 (DSMSSTASSTSNRSSTRSLLSVSS) are compositionally biased toward low complexity. Ser-718 carries the phosphoserine modification. Residues 801 to 811 (HPPPPVPPRGR) show a composition bias toward pro residues.

Homooligomer. Interacts (phosphorylated on tyrosine residues within YXXM motifs) with PIK3R1 (via SH2 domain); required for BCR- and TLR-mediated activation of phosphoinositide 3-kinase. Interacts (via polyproline C-terminal region) with ABI1 (via SH3 domain); the interaction promotes phosphorylation of PIK3AP1 by ABL1. May interact with MYD88 and TIRAP. In terms of processing, constitutively phosphorylated. Phosphorylated on tyrosine residues in C-terminal region by ABL1. Phosphorylated on tyrosine residues within the YXXM motifs by BTK and SYK. Isoform 1 and isoform 2 are phosphorylated on tyrosine residues, most likely within the YXXM motifs, via CD19 activation. Toll-like receptor activation induces appearance of a phosphorylated form associated with membranes. As to expression, predominantly expressed in spleen (at protein level). Expressed at lower levels in thymus, liver and lung. Expressed in B-cells, macrophages and natural killer (NK) cells.

Its subcellular location is the cytoplasm. The protein resides in the cell membrane. Functionally, signaling adapter that contributes to B-cell development by linking B-cell receptor (BCR) signaling to the phosphoinositide 3-kinase (PI3K)-Akt signaling pathway. Has a complementary role to the BCR coreceptor CD19, coupling BCR and PI3K activation by providing a docking site for the PI3K subunit PIK3R1. Alternatively, links Toll-like receptor (TLR) signaling to PI3K activation, a process preventing excessive inflammatory cytokine production. Also involved in the activation of PI3K in natural killer cells. May be involved in the survival of mature B-cells via activation of REL. This is Phosphoinositide 3-kinase adapter protein 1 (Pik3ap1) from Mus musculus (Mouse).